A 140-amino-acid polypeptide reads, in one-letter code: Putative pre-16S rRNA nuclease (140 aa).

This sequence belongs to the YqgF nuclease family.

The protein resides in the cytoplasm. Functionally, could be a nuclease involved in processing of the 5'-end of pre-16S rRNA. This is Putative pre-16S rRNA nuclease from Mycoplasma pneumoniae (strain ATCC 29342 / M129 / Subtype 1) (Mycoplasmoides pneumoniae).